Here is a 266-residue protein sequence, read N- to C-terminus: Regulatory protein RecX (266 aa).

The protein belongs to the RecX family.

Its subcellular location is the cytoplasm. Functionally, modulates RecA activity. The protein is Regulatory protein RecX of Leuconostoc citreum (strain KM20).